A 331-amino-acid chain; its full sequence is MDPRSEVLLRQADLFQGPLLIAGAPADDLLGQLPKANAWTWHAGDQAMLDARFAGRSHYGVDVPPVAFEAAVLFLPKSRELAAYLLNALASRLGGGELYLVGEKRGGIEGAAKHLQALGKPRKLDSARHCQLWQVTVDNAPEAKPLESLAERFALELEDGPLQVVSLPGVFSHGRLDRGTALLLKHLDNLPVGHVLDFGCGAGVLGATVKRRYPQSRVTMLDVDAFAVAASRLTLAANKLEGEVISGDGIDAAPGDLSLILSNPPFHTGVHTNYQASENLLKKSGQHLRKGGEMRLVANSFLRYQPLIEGALGNCRTCAEADGFRIYQATR.

Belongs to the methyltransferase superfamily. RsmC family. Monomer.

It localises to the cytoplasm. It catalyses the reaction guanosine(1207) in 16S rRNA + S-adenosyl-L-methionine = N(2)-methylguanosine(1207) in 16S rRNA + S-adenosyl-L-homocysteine + H(+). Functionally, specifically methylates the guanine in position 1207 of 16S rRNA in the 30S particle. In Pseudomonas putida (strain W619), this protein is Ribosomal RNA small subunit methyltransferase C.